The chain runs to 224 residues: MKYTLTRIDPDAPVERYPQEQSQTVDDPLAQDATRGIMMGRLEEVLQDTVNWGRKNSLWPYNFGISCCYVEMCTAFTSPHDVARFGAEVIRASPRQADFMVIAGTPFIKMAPVIQRLYEQLLEPKWVISMGACANSGGMYDIYSVVQGVDKFLPVDVYIPGCPPRPEAFLQALMLLQDSIGKERRPLSWVVGDQGIYRPDMPAEKDRKRGERIKVTNLRTPDEI.

Cys-67, Cys-68, Cys-133, and Cys-162 together coordinate [4Fe-4S] cluster. Positions 200–224 (DMPAEKDRKRGERIKVTNLRTPDEI) are disordered. The span at 201–224 (MPAEKDRKRGERIKVTNLRTPDEI) shows a compositional bias: basic and acidic residues.

Belongs to the complex I 20 kDa subunit family. As to quaternary structure, NDH-1 is composed of 14 different subunits. Subunits NuoB, C, D, E, F, and G constitute the peripheral sector of the complex. [4Fe-4S] cluster is required as a cofactor.

Its subcellular location is the cell inner membrane. The catalysed reaction is a quinone + NADH + 5 H(+)(in) = a quinol + NAD(+) + 4 H(+)(out). Functionally, NDH-1 shuttles electrons from NADH, via FMN and iron-sulfur (Fe-S) centers, to quinones in the respiratory chain. The immediate electron acceptor for the enzyme in this species is believed to be ubiquinone. Couples the redox reaction to proton translocation (for every two electrons transferred, four hydrogen ions are translocated across the cytoplasmic membrane), and thus conserves the redox energy in a proton gradient. The sequence is that of NADH-quinone oxidoreductase subunit B from Aeromonas salmonicida (strain A449).